We begin with the raw amino-acid sequence, 208 residues long: Outer-membrane lipoprotein carrier protein (208 aa).

The N-terminal stretch at 1-21 (MPAFRYLIVLPLLCWGFASQA) is a signal peptide.

Belongs to the LolA family. Monomer.

It localises to the periplasm. In terms of biological role, participates in the translocation of lipoproteins from the inner membrane to the outer membrane. Only forms a complex with a lipoprotein if the residue after the N-terminal Cys is not an aspartate (The Asp acts as a targeting signal to indicate that the lipoprotein should stay in the inner membrane). The protein is Outer-membrane lipoprotein carrier protein of Methylococcus capsulatus (strain ATCC 33009 / NCIMB 11132 / Bath).